Consider the following 719-residue polypeptide: 1,4-alpha-glucan branching enzyme GlgB (719 aa).

Aspartate 400 acts as the Nucleophile in catalysis. Glutamate 453 functions as the Proton donor in the catalytic mechanism.

It belongs to the glycosyl hydrolase 13 family. GlgB subfamily. Monomer.

It carries out the reaction Transfers a segment of a (1-&gt;4)-alpha-D-glucan chain to a primary hydroxy group in a similar glucan chain.. It participates in glycan biosynthesis; glycogen biosynthesis. In terms of biological role, catalyzes the formation of the alpha-1,6-glucosidic linkages in glycogen by scission of a 1,4-alpha-linked oligosaccharide from growing alpha-1,4-glucan chains and the subsequent attachment of the oligosaccharide to the alpha-1,6 position. This Chlamydia caviae (strain ATCC VR-813 / DSM 19441 / 03DC25 / GPIC) (Chlamydophila caviae) protein is 1,4-alpha-glucan branching enzyme GlgB.